Reading from the N-terminus, the 448-residue chain is Bifunctional protein GlmU (448 aa).

Positions 1 to 229 (MNNHTLNIII…NDEIQGINNL (229 aa)) are pyrophosphorylase. UDP-N-acetyl-alpha-D-glucosamine-binding positions include 11–14 (LAAG), K25, Q76, 81–82 (GT), 103–105 (YGD), G140, E154, N169, and N227. D105 contributes to the Mg(2+) binding site. N227 provides a ligand contact to Mg(2+). Residues 230-250 (LQLVRAEKIYQKQQAKLLLLS) form a linker region. The tract at residues 251–448 (GIMIYNPSNF…NEKKQIHKKL (198 aa)) is N-acetyltransferase. Residue K351 coordinates UDP-N-acetyl-alpha-D-glucosamine. The Proton acceptor role is filled by H363. UDP-N-acetyl-alpha-D-glucosamine is bound by residues Y366 and N377. Residues A380, 386–387 (NY), S405, and A423 contribute to the acetyl-CoA site.

This sequence in the N-terminal section; belongs to the N-acetylglucosamine-1-phosphate uridyltransferase family. It in the C-terminal section; belongs to the transferase hexapeptide repeat family. Homotrimer. Mg(2+) serves as cofactor.

The protein localises to the cytoplasm. It carries out the reaction alpha-D-glucosamine 1-phosphate + acetyl-CoA = N-acetyl-alpha-D-glucosamine 1-phosphate + CoA + H(+). It catalyses the reaction N-acetyl-alpha-D-glucosamine 1-phosphate + UTP + H(+) = UDP-N-acetyl-alpha-D-glucosamine + diphosphate. It functions in the pathway nucleotide-sugar biosynthesis; UDP-N-acetyl-alpha-D-glucosamine biosynthesis; N-acetyl-alpha-D-glucosamine 1-phosphate from alpha-D-glucosamine 6-phosphate (route II): step 2/2. The protein operates within nucleotide-sugar biosynthesis; UDP-N-acetyl-alpha-D-glucosamine biosynthesis; UDP-N-acetyl-alpha-D-glucosamine from N-acetyl-alpha-D-glucosamine 1-phosphate: step 1/1. It participates in bacterial outer membrane biogenesis; LPS lipid A biosynthesis. In terms of biological role, catalyzes the last two sequential reactions in the de novo biosynthetic pathway for UDP-N-acetylglucosamine (UDP-GlcNAc). The C-terminal domain catalyzes the transfer of acetyl group from acetyl coenzyme A to glucosamine-1-phosphate (GlcN-1-P) to produce N-acetylglucosamine-1-phosphate (GlcNAc-1-P), which is converted into UDP-GlcNAc by the transfer of uridine 5-monophosphate (from uridine 5-triphosphate), a reaction catalyzed by the N-terminal domain. The protein is Bifunctional protein GlmU of Buchnera aphidicola subsp. Baizongia pistaciae (strain Bp).